Here is a 250-residue protein sequence, read N- to C-terminus: Proteasome subunit alpha type-7 (250 aa).

Belongs to the peptidase T1A family. As to quaternary structure, the 26S proteasome consists of a 20S proteasome core and two 19S regulatory subunits. The 20S proteasome core is composed of 28 subunits that are arranged in four stacked rings, resulting in a barrel-shaped structure. The two end rings are each formed by seven alpha subunits, and the two central rings are each formed by seven beta subunits. The catalytic chamber with the active sites is on the inside of the barrel.

The protein resides in the cytoplasm. Its subcellular location is the nucleus. Functionally, the proteasome is a multicatalytic proteinase complex which is characterized by its ability to cleave peptides with Arg, Phe, Tyr, Leu, and Glu adjacent to the leaving group at neutral or slightly basic pH. The proteasome has an ATP-dependent proteolytic activity. The sequence is that of Proteasome subunit alpha type-7 (psmA7) from Dictyostelium discoideum (Social amoeba).